Here is a 607-residue protein sequence, read N- to C-terminus: UvrABC system protein C (607 aa).

The region spanning 15–94 (ENPGVYLMKN…IKRHRPYFNV (80 aa)) is the GIY-YIG domain. Residues 204–239 (DQVLKLLIRLMNEASARLDYETAALRRDQIASIKEV) enclose the UVR domain.

Belongs to the UvrC family. As to quaternary structure, interacts with UvrB in an incision complex.

The protein localises to the cytoplasm. In terms of biological role, the UvrABC repair system catalyzes the recognition and processing of DNA lesions. UvrC both incises the 5' and 3' sides of the lesion. The N-terminal half is responsible for the 3' incision and the C-terminal half is responsible for the 5' incision. This is UvrABC system protein C from Dehalococcoides mccartyi (strain ATCC BAA-2100 / JCM 16839 / KCTC 5957 / BAV1).